The primary structure comprises 930 residues: Translation initiation factor IF-2 (930 aa).

Positions Phe50–Val67 are enriched in low complexity. Disordered stretches follow at residues Phe50–Phe196 and Glu260–Pro346. Basic and acidic residues-rich tracts occupy residues Ser68–Pro90 and Phe110–Arg125. Positions Lys129–Arg141 are enriched in low complexity. Basic and acidic residues-rich tracts occupy residues Arg157 to Gln172 and Val262 to Arg295. The span at Asn309–Asn318 shows a compositional bias: low complexity. The span at Val337 to Pro346 shows a compositional bias: basic and acidic residues. A tr-type G domain is found at Glu432–Glu599. Positions Gly441–Thr448 are G1. Gly441–Thr448 is a GTP binding site. The interval Gly466–His470 is G2. Positions Asp487 to Gly490 are G3. GTP-binding positions include Asp487–His491 and Asn541–Asp544. A G4 region spans residues Asn541–Asp544. The tract at residues Ser577–Lys579 is G5.

The protein belongs to the TRAFAC class translation factor GTPase superfamily. Classic translation factor GTPase family. IF-2 subfamily.

It localises to the cytoplasm. Its function is as follows. One of the essential components for the initiation of protein synthesis. Protects formylmethionyl-tRNA from spontaneous hydrolysis and promotes its binding to the 30S ribosomal subunits. Also involved in the hydrolysis of GTP during the formation of the 70S ribosomal complex. The polypeptide is Translation initiation factor IF-2 (Streptococcus pneumoniae serotype 19F (strain G54)).